Here is a 629-residue protein sequence, read N- to C-terminus: tRNA uridine 5-carboxymethylaminomethyl modification enzyme MnmG (629 aa).

FAD contacts are provided by residues G14–G19, V126, and S181. Residue G273–F287 participates in NAD(+) binding. Position 370 (Q370) interacts with FAD.

Belongs to the MnmG family. In terms of assembly, homodimer. Heterotetramer of two MnmE and two MnmG subunits. The cofactor is FAD.

Its subcellular location is the cytoplasm. In terms of biological role, NAD-binding protein involved in the addition of a carboxymethylaminomethyl (cmnm) group at the wobble position (U34) of certain tRNAs, forming tRNA-cmnm(5)s(2)U34. This chain is tRNA uridine 5-carboxymethylaminomethyl modification enzyme MnmG, found in Bacillus cereus (strain ZK / E33L).